Consider the following 384-residue polypeptide: Putative sarcosine oxidase (384 aa).

6–36 (DVVVVGAGIFGSCTAYNCQKIGLKTLLLEQF) is an FAD binding site. Position 315 is an S-8alpha-FAD cysteine (cysteine 315).

The protein belongs to the MSOX/MTOX family. The cofactor is FAD.

It carries out the reaction sarcosine + O2 + H2O = formaldehyde + glycine + H2O2. In Caenorhabditis elegans, this protein is Putative sarcosine oxidase.